We begin with the raw amino-acid sequence, 189 residues long: Protein shisa-like-2A (189 aa).

Helical transmembrane passes span 48 to 68 and 70 to 90; these read SFFPYEHNYMWWLSIGALVGL and TAAVVLLAFLITACVLCYLFI. The disordered stretch occupies residues 98-189; it reads LDPGLSLQTT…PTPGPHGPVP (92 aa). The segment covering 140-171 has biased composition (polar residues); sequence NTHLESNKKQTVSPTCLPQNQFMATVTASNIP.

It belongs to the shisa family.

The protein localises to the membrane. In Mus musculus (Mouse), this protein is Protein shisa-like-2A (Shisal2a).